Reading from the N-terminus, the 94-residue chain is RNA-binding protein Hfq (94 aa).

Residues D9–F68 enclose the Sm domain. The disordered stretch occupies residues V70–E94.

This sequence belongs to the Hfq family. In terms of assembly, homohexamer.

Its function is as follows. RNA chaperone that binds small regulatory RNA (sRNAs) and mRNAs to facilitate mRNA translational regulation in response to envelope stress, environmental stress and changes in metabolite concentrations. Also binds with high specificity to tRNAs. The protein is RNA-binding protein Hfq of Shewanella woodyi (strain ATCC 51908 / MS32).